The chain runs to 295 residues: uncharacterized protein (295 aa).

Residues 2–226 (LSIESLCKSY…QQTNVFTLSV (225 aa)) form the ABC transporter domain. 34–41 (GPNGAGKT) lines the ATP pocket.

This sequence belongs to the ABC transporter superfamily.

This is an uncharacterized protein from Bacillus subtilis (strain 168).